The following is a 572-amino-acid chain: Proline--tRNA ligase (572 aa).

It belongs to the class-II aminoacyl-tRNA synthetase family. ProS type 1 subfamily. As to quaternary structure, homodimer.

Its subcellular location is the cytoplasm. The catalysed reaction is tRNA(Pro) + L-proline + ATP = L-prolyl-tRNA(Pro) + AMP + diphosphate. Its function is as follows. Catalyzes the attachment of proline to tRNA(Pro) in a two-step reaction: proline is first activated by ATP to form Pro-AMP and then transferred to the acceptor end of tRNA(Pro). As ProRS can inadvertently accommodate and process non-cognate amino acids such as alanine and cysteine, to avoid such errors it has two additional distinct editing activities against alanine. One activity is designated as 'pretransfer' editing and involves the tRNA(Pro)-independent hydrolysis of activated Ala-AMP. The other activity is designated 'posttransfer' editing and involves deacylation of mischarged Ala-tRNA(Pro). The misacylated Cys-tRNA(Pro) is not edited by ProRS. In Enterobacter sp. (strain 638), this protein is Proline--tRNA ligase.